Consider the following 536-residue polypeptide: Arginine--tRNA ligase (536 aa).

Residues 119–129 (ANPTGFLHIGH) carry the 'HIGH' region motif.

The protein belongs to the class-I aminoacyl-tRNA synthetase family. As to quaternary structure, monomer.

The protein resides in the cytoplasm. The enzyme catalyses tRNA(Arg) + L-arginine + ATP = L-arginyl-tRNA(Arg) + AMP + diphosphate. The chain is Arginine--tRNA ligase from Mycoplasma mobile (strain ATCC 43663 / 163K / NCTC 11711) (Mesomycoplasma mobile).